A 408-amino-acid chain; its full sequence is Interferon-activable protein 203 (408 aa).

In terms of domain architecture, Pyrin spans 1–87; sequence MAEYKNIVLL…AKKLKTEKAK (87 aa). Positions 84–208 are disordered; sequence EKAKVQEKKK…EGHHQGPKQV (125 aa). Basic residues predominate over residues 92–102; sequence KKGKCKTAGKK. Residues 150 to 159 show a composition bias toward polar residues; sequence AQLPETSGTN. Residues 190–388 enclose the HIN-200 domain; the sequence is TVPKEPSREE…SVRHSYMQVI (199 aa).

Belongs to the HIN-200 family. As to expression, constitutively expressed in the thymus, bone marrow and spleen. Isoform 1 and isoform 3 are present in liver (at protein level).

Its subcellular location is the nucleus. In Mus musculus (Mouse), this protein is Interferon-activable protein 203 (Ifi203).